The following is a 37-amino-acid chain: Cytochrome b6-f complex subunit 5 (37 aa).

The helical transmembrane segment at 5–25 (LLSGIVLGLVPVTIAGLFVTA) threads the bilayer.

The protein belongs to the PetG family. The 4 large subunits of the cytochrome b6-f complex are cytochrome b6, subunit IV (17 kDa polypeptide, PetD), cytochrome f and the Rieske protein, while the 4 small subunits are PetG, PetL, PetM and PetN. The complex functions as a dimer.

The protein localises to the plastid. It localises to the chloroplast thylakoid membrane. In terms of biological role, component of the cytochrome b6-f complex, which mediates electron transfer between photosystem II (PSII) and photosystem I (PSI), cyclic electron flow around PSI, and state transitions. PetG is required for either the stability or assembly of the cytochrome b6-f complex. The sequence is that of Cytochrome b6-f complex subunit 5 from Chlamydomonas moewusii (Chlamydomonas eugametos).